A 210-amino-acid chain; its full sequence is Probable molybdenum cofactor guanylyltransferase (210 aa).

GTP contacts are provided by residues 18-20 (LAG), K31, N59, D86, and D111. D111 contacts Mg(2+).

This sequence belongs to the MobA family. Requires Mg(2+) as cofactor.

It is found in the cytoplasm. It catalyses the reaction Mo-molybdopterin + GTP + H(+) = Mo-molybdopterin guanine dinucleotide + diphosphate. Functionally, transfers a GMP moiety from GTP to Mo-molybdopterin (Mo-MPT) cofactor (Moco or molybdenum cofactor) to form Mo-molybdopterin guanine dinucleotide (Mo-MGD) cofactor. The protein is Probable molybdenum cofactor guanylyltransferase (nasC) of Haloferax mediterranei (strain ATCC 33500 / DSM 1411 / JCM 8866 / NBRC 14739 / NCIMB 2177 / R-4) (Halobacterium mediterranei).